The sequence spans 122 residues: Large ribosomal subunit protein bL17 (122 aa).

The protein belongs to the bacterial ribosomal protein bL17 family. Part of the 50S ribosomal subunit. Contacts protein L32.

This is Large ribosomal subunit protein bL17 from Staphylococcus carnosus (strain TM300).